The sequence spans 211 residues: Large ribosomal subunit protein bL9 (211 aa).

Residues Asp-180–Asp-211 form a disordered region.

This sequence belongs to the bacterial ribosomal protein bL9 family.

Binds to the 23S rRNA. The chain is Large ribosomal subunit protein bL9 from Jannaschia sp. (strain CCS1).